A 640-amino-acid polypeptide reads, in one-letter code: uncharacterized protein (640 aa).

The TIR domain occupies 184–328 (VKRDTIFIIK…KVQRSIDTMI (145 aa)). Positions 613 to 640 (LPNDLDDEDEELDDSTLGRPDSDEEGGE) are disordered. Over residues 616-626 (DLDDEDEELDD) the composition is skewed to acidic residues.

This is an uncharacterized protein from Sinorhizobium fredii (strain NBRC 101917 / NGR234).